The sequence spans 108 residues: Large ribosomal subunit protein P1B (108 aa).

Low complexity predominate over residues 72 to 84 (AGSASGAAAGGEA). Residues 72-108 (AGSASGAAAGGEAAAEEAAEEEAAEESDDDMGFGLFD) are disordered. Positions 85–102 (AAEEAAEEEAAEESDDDM) are enriched in acidic residues.

This sequence belongs to the eukaryotic ribosomal protein P1/P2 family. P1 and P2 exist as dimers at the large ribosomal subunit. In terms of processing, phosphorylated.

Functionally, plays an important role in the elongation step of protein synthesis. This chain is Large ribosomal subunit protein P1B (RPP1B), found in Candida albicans (Yeast).